We begin with the raw amino-acid sequence, 536 residues long: Phosphoenolpyruvate carboxykinase (ATP) (536 aa).

Arginine 63, tyrosine 203, and lysine 209 together coordinate substrate. ATP is bound by residues lysine 209, histidine 228, and 244 to 252 (GLSGTGKTT). The Mn(2+) site is built by lysine 209 and histidine 228. Aspartate 265 contributes to the Mn(2+) binding site. ATP contacts are provided by residues glutamate 293, arginine 329, 445-446 (RI), and threonine 451. Arginine 329 provides a ligand contact to substrate.

Belongs to the phosphoenolpyruvate carboxykinase (ATP) family. In terms of assembly, monomer. It depends on Mn(2+) as a cofactor.

The protein localises to the cytoplasm. It carries out the reaction oxaloacetate + ATP = phosphoenolpyruvate + ADP + CO2. The protein operates within carbohydrate biosynthesis; gluconeogenesis. Its function is as follows. Involved in the gluconeogenesis. Catalyzes the conversion of oxaloacetate (OAA) to phosphoenolpyruvate (PEP) through direct phosphoryl transfer between the nucleoside triphosphate and OAA. This is Phosphoenolpyruvate carboxykinase (ATP) from Colwellia psychrerythraea (strain 34H / ATCC BAA-681) (Vibrio psychroerythus).